The chain runs to 235 residues: Fibrillarin-like rRNA/tRNA 2'-O-methyltransferase (235 aa).

Residues Thr91–Thr92, Glu110–Phe111, Asp137–Ala138, and Asp157–Gln160 each bind S-adenosyl-L-methionine.

It belongs to the methyltransferase superfamily. Fibrillarin family. Interacts with nop5. Component of box C/D small ribonucleoprotein (sRNP) particles that contain rpl7ae, FlpA and nop5, plus a guide RNA.

In terms of biological role, involved in pre-rRNA and tRNA processing. Utilizes the methyl donor S-adenosyl-L-methionine to catalyze the site-specific 2'-hydroxyl methylation of ribose moieties in rRNA and tRNA. Site specificity is provided by a guide RNA that base pairs with the substrate. Methylation occurs at a characteristic distance from the sequence involved in base pairing with the guide RNA. This Pyrobaculum aerophilum (strain ATCC 51768 / DSM 7523 / JCM 9630 / CIP 104966 / NBRC 100827 / IM2) protein is Fibrillarin-like rRNA/tRNA 2'-O-methyltransferase.